The primary structure comprises 283 residues: Urease accessory protein UreD (283 aa).

Belongs to the UreD family. As to quaternary structure, ureD, UreF and UreG form a complex that acts as a GTP-hydrolysis-dependent molecular chaperone, activating the urease apoprotein by helping to assemble the nickel containing metallocenter of UreC. The UreE protein probably delivers the nickel.

It localises to the cytoplasm. Required for maturation of urease via the functional incorporation of the urease nickel metallocenter. This Rhodopseudomonas palustris (strain BisB5) protein is Urease accessory protein UreD.